The sequence spans 382 residues: Lipid-A-disaccharide synthase (382 aa).

The protein belongs to the LpxB family.

It catalyses the reaction 2-N,3-O-bis[(3R)-3-hydroxytetradecanoyl]-alpha-D-glucosaminyl 1-phosphate + UDP-2-N,3-O-bis[(3R)-3-hydroxytetradecanoyl]-alpha-D-glucosamine = lipid A disaccharide (E. coli) + UDP + H(+). The enzyme catalyses a lipid X + a UDP-2-N,3-O-bis[(3R)-3-hydroxyacyl]-alpha-D-glucosamine = a lipid A disaccharide + UDP + H(+). It participates in glycolipid biosynthesis; lipid IV(A) biosynthesis; lipid IV(A) from (3R)-3-hydroxytetradecanoyl-[acyl-carrier-protein] and UDP-N-acetyl-alpha-D-glucosamine: step 5/6. Condensation of UDP-2,3-diacylglucosamine and 2,3-diacylglucosamine-1-phosphate to form lipid A disaccharide, a precursor of lipid A, a phosphorylated glycolipid that anchors the lipopolysaccharide to the outer membrane of the cell. In Escherichia coli (strain 55989 / EAEC), this protein is Lipid-A-disaccharide synthase.